Consider the following 151-residue polypeptide: Protein SprT-like (151 aa).

The region spanning 7 to 147 (QKLTESISES…GKCKGKLHLH (141 aa)) is the SprT-like domain. His-67 contacts Zn(2+). Glu-68 is a catalytic residue. His-71 contacts Zn(2+).

This sequence belongs to the SprT family. Requires Zn(2+) as cofactor.

It is found in the cytoplasm. The chain is Protein SprT-like from Staphylococcus carnosus (strain TM300).